Here is an 85-residue protein sequence, read N- to C-terminus: SCOCO-like protein 1 (85 aa).

Residues 1 to 20 are compositionally biased toward polar residues; that stretch reads MSAENISTGSPTGKQPSSEV. A disordered region spans residues 1 to 34; sequence MSAENISTGSPTGKQPSSEVNLGEREAGTKNERM. Ser-2 bears the N-acetylserine mark. Residue Ser-10 is modified to Phosphoserine. The segment covering 22 to 34 has biased composition (basic and acidic residues); it reads LGEREAGTKNERM.

It belongs to the SLO1 family. As to quaternary structure, interacts with ARL3.

The protein is SCOCO-like protein 1 (SLO1) of Saccharomyces cerevisiae (strain ATCC 204508 / S288c) (Baker's yeast).